A 795-amino-acid polypeptide reads, in one-letter code: Phenylalanine--tRNA ligase beta subunit (795 aa).

Positions 39-148 (AGSFHGVVVG…ADAPIGTDIR (110 aa)) constitute a tRNA-binding domain. A B5 domain is found at 401–476 (PKRATITLRR…RVYGYNNIPD (76 aa)). Aspartate 454, aspartate 460, glutamate 463, and glutamate 464 together coordinate Mg(2+). The 94-residue stretch at 701–794 (SRFPANRRDI…LKERFQASLR (94 aa)) folds into the FDX-ACB domain.

The protein belongs to the phenylalanyl-tRNA synthetase beta subunit family. Type 1 subfamily. Tetramer of two alpha and two beta subunits. The cofactor is Mg(2+).

The protein localises to the cytoplasm. The catalysed reaction is tRNA(Phe) + L-phenylalanine + ATP = L-phenylalanyl-tRNA(Phe) + AMP + diphosphate + H(+). This Escherichia coli (strain K12) protein is Phenylalanine--tRNA ligase beta subunit (pheT).